Consider the following 530-residue polypeptide: T-complex protein 1 subunit delta (530 aa).

Over residues 1 to 13 (MVSQAKQPSNATF) the composition is skewed to polar residues. Positions 1 to 20 (MVSQAKQPSNATFKNREKPQ) are disordered.

The protein belongs to the TCP-1 chaperonin family. In terms of assembly, heterooligomeric complex of about 850 to 900 kDa that forms two stacked rings, 12 to 16 nm in diameter.

The protein localises to the cytoplasm. Molecular chaperone; assists the folding of proteins upon ATP hydrolysis. Known to play a role, in vitro, in the folding of actin and tubulin. In Kluyveromyces lactis (strain ATCC 8585 / CBS 2359 / DSM 70799 / NBRC 1267 / NRRL Y-1140 / WM37) (Yeast), this protein is T-complex protein 1 subunit delta (CCT4).